The chain runs to 269 residues: 2-dehydro-3-deoxyphosphooctonate aldolase (269 aa).

It belongs to the KdsA family.

The protein localises to the cytoplasm. The enzyme catalyses D-arabinose 5-phosphate + phosphoenolpyruvate + H2O = 3-deoxy-alpha-D-manno-2-octulosonate-8-phosphate + phosphate. Its pathway is carbohydrate biosynthesis; 3-deoxy-D-manno-octulosonate biosynthesis; 3-deoxy-D-manno-octulosonate from D-ribulose 5-phosphate: step 2/3. It functions in the pathway bacterial outer membrane biogenesis; lipopolysaccharide biosynthesis. The chain is 2-dehydro-3-deoxyphosphooctonate aldolase from Chlamydia caviae (strain ATCC VR-813 / DSM 19441 / 03DC25 / GPIC) (Chlamydophila caviae).